The sequence spans 472 residues: 3-isopropylmalate dehydratase large subunit (472 aa).

The [4Fe-4S] cluster site is built by C353, C414, and C417.

It belongs to the aconitase/IPM isomerase family. LeuC type 1 subfamily. Heterodimer of LeuC and LeuD. Requires [4Fe-4S] cluster as cofactor.

The catalysed reaction is (2R,3S)-3-isopropylmalate = (2S)-2-isopropylmalate. It participates in amino-acid biosynthesis; L-leucine biosynthesis; L-leucine from 3-methyl-2-oxobutanoate: step 2/4. In terms of biological role, catalyzes the isomerization between 2-isopropylmalate and 3-isopropylmalate, via the formation of 2-isopropylmaleate. In Acinetobacter baumannii (strain AB307-0294), this protein is 3-isopropylmalate dehydratase large subunit.